The sequence spans 163 residues: MRRILSVLLENESGALSRVIGLFSQRGYNIESLTVAPTDDPTLSRMTIQTVGDEKVLEQIEKQLHKLVDVLRVSELGQGAHVEREIMLVKIQASGYGREEVKRNTEIFRGQIIDVTPTLYTVQLAGTSDKLDAFLASLRDVAKIVEVARSGVVGLSRGDKIMR.

The ACT domain occupies 4–78 (ILSVLLENES…DVLRVSELGQ (75 aa)).

Belongs to the acetolactate synthase small subunit family. In terms of assembly, dimer of large and small chains.

The catalysed reaction is 2 pyruvate + H(+) = (2S)-2-acetolactate + CO2. Its pathway is amino-acid biosynthesis; L-isoleucine biosynthesis; L-isoleucine from 2-oxobutanoate: step 1/4. The protein operates within amino-acid biosynthesis; L-valine biosynthesis; L-valine from pyruvate: step 1/4. Sensitive to valine inhibition. This is Acetolactate synthase isozyme 3 small subunit (ilvH) from Salmonella typhimurium (strain LT2 / SGSC1412 / ATCC 700720).